A 181-amino-acid polypeptide reads, in one-letter code: Bifunctional protein PyrR (181 aa).

The PRPP-binding signature appears at V101–T113.

This sequence belongs to the purine/pyrimidine phosphoribosyltransferase family. PyrR subfamily.

The catalysed reaction is UMP + diphosphate = 5-phospho-alpha-D-ribose 1-diphosphate + uracil. Functionally, regulates the transcription of the pyrimidine nucleotide (pyr) operon in response to exogenous pyrimidines. Its function is as follows. Also displays a weak uracil phosphoribosyltransferase activity which is not physiologically significant. This is Bifunctional protein PyrR from Desulfosudis oleivorans (strain DSM 6200 / JCM 39069 / Hxd3) (Desulfococcus oleovorans).